Here is a 78-residue protein sequence, read N- to C-terminus: UPF0291 protein LBUL_1264 (78 aa).

It belongs to the UPF0291 family.

The protein localises to the cytoplasm. This chain is UPF0291 protein LBUL_1264, found in Lactobacillus delbrueckii subsp. bulgaricus (strain ATCC BAA-365 / Lb-18).